Reading from the N-terminus, the 219-residue chain is 2-hydroxy-3-keto-5-methylthiopentenyl-1-phosphate phosphatase (219 aa).

The protein belongs to the HAD-like hydrolase superfamily. MtnX family.

It catalyses the reaction 2-hydroxy-5-methylsulfanyl-3-oxopent-1-enyl phosphate + H2O = 1,2-dihydroxy-5-(methylsulfanyl)pent-1-en-3-one + phosphate. The protein operates within amino-acid biosynthesis; L-methionine biosynthesis via salvage pathway; L-methionine from S-methyl-5-thio-alpha-D-ribose 1-phosphate: step 4/6. In terms of biological role, dephosphorylates 2-hydroxy-3-keto-5-methylthiopentenyl-1-phosphate (HK-MTPenyl-1-P) yielding 1,2-dihydroxy-3-keto-5-methylthiopentene (DHK-MTPene). The polypeptide is 2-hydroxy-3-keto-5-methylthiopentenyl-1-phosphate phosphatase (Bacillus cereus (strain ATCC 10987 / NRS 248)).